A 285-amino-acid chain; its full sequence is Putative cysteine-rich repeat secretory protein 14 (285 aa).

A signal peptide spans methionine 1 to serine 30. Gnk2-homologous domains lie at tyrosine 37–threonine 143 and arginine 161–phenylalanine 273.

The protein belongs to the cysteine-rich repeat secretory protein family.

It localises to the secreted. This Arabidopsis thaliana (Mouse-ear cress) protein is Putative cysteine-rich repeat secretory protein 14 (CRRSP14).